The sequence spans 140 residues: Profilin (140 aa).

N-acetylserine is present on Ser-2.

It belongs to the profilin family. In terms of assembly, occurs in many kinds of cells as a complex with monomeric actin in a 1:1 ratio.

It is found in the cytoplasm. It localises to the cytoskeleton. Binds to actin and affects the structure of the cytoskeleton. At high concentrations, profilin prevents the polymerization of actin, whereas it enhances it at low concentrations. By binding to PIP2, it inhibits the formation of IP3 and DG. The chain is Profilin from Clypeaster japonicus (Sand dollar).